A 447-amino-acid polypeptide reads, in one-letter code: MKILLLCVALLLTWDNGMVLGEQEFSDNELQELSTQGSRYVNKEIQNAVQGVKHIKTLIEKTNAERKSLLNSLEEAKKKKEGALDDTRDSEMKLKAFPEVCNETMMALWEECKPCLKHTCMKFYARVCRSGSGLVGRQLEEFLNQSSPFYFWMNGDRIDSLLESDRQQSQVLDAMQDSFTRASGIIDTLFQDRFFTHEPQDIHHFSPMGFPHKRPHFLYPKSRLVRSLMPLSHYGPLSFHNMFQPFFDMIHQAQQAMDVQLHSPALQFPDVDFLKEGEDDPTVCKEIRHNSTGCLKMKGQCEKCQEILSVDCSTNNPAQANLRQELNDSLQVAERLTQQYNELLHSLQSKMLNTSSLLEQLNDQFTWVSQLANLTQGDDQYLRVSTVTTHSSDSEVPSRVTEVVVKLFDSDPITVVLPEEVSKDNPKFMDTVAEKALQEYRRKSRME.

The first 21 residues, methionine 1–glycine 21, serve as a signal peptide directing secretion. A Nuclear localization signal motif is present at residues lysine 77–lysine 80. Cystine bridges form between cysteine 101/cysteine 312, cysteine 112/cysteine 304, cysteine 115/cysteine 301, cysteine 120/cysteine 294, and cysteine 128/cysteine 284. N-linked (GlcNAc...) asparagine glycosylation occurs at asparagine 102. Serine 132 bears the Phosphoserine mark. Asparagine 144, asparagine 290, asparagine 327, asparagine 353, and asparagine 373 each carry an N-linked (GlcNAc...) asparagine glycan. Serine 394 carries the post-translational modification Phosphoserine. The Nuclear localization signal motif lies at arginine 441–arginine 445.

The protein belongs to the clusterin family. As to quaternary structure, antiparallel disulfide-linked heterodimer of an alpha chain and a beta chain. Self-associates and forms higher oligomers. Interacts with a broad range of misfolded proteins, including APP, APOC2 and LYZ. Slightly acidic pH promotes interaction with misfolded proteins. Forms high-molecular weight oligomers upon interaction with misfolded proteins. Interacts with APOA1, LRP2, CLUAP1 and PON1. Interacts with the complement membrane attack complex. Interacts (via alpha chain) with XRCC6. Interacts with SYVN1, COMMD1, BTRC, CUL1 and with ubiquitin and SCF (SKP1-CUL1-F-box protein) E3 ubiquitin-protein ligase complexes. Interacts (via alpha chain) with BAX in stressed cells, where BAX undergoes a conformation change leading to association with the mitochondrial membrane. Does not interact with BAX in unstressed cells. Found in a complex with LTF, CLU, EPPIN and SEMG1. Interacts (immaturely glycosylated pre-secreted form) with HSPA5; this interaction promotes CLU stability and facilitates stress-induced CLU retrotranslocation from the secretory pathway to the mitochondria, thereby reducing stress-induced apoptosis by stabilizing mitochondrial membrane integrity. Interacts with BCL2L1; this interaction releases and activates BAX and promotes cell death. Interacts with TGFBR2 and ACVR1. Interacts (secreted form) with STMN3; this interaction may act as an important modulator during neuronal differentiation. Interacts with VLDLR and LRP8. In terms of processing, proteolytically cleaved on its way through the secretory system, probably within the Golgi lumen. Proteolytic cleavage is not necessary for its chaperone activity. All non-secreted forms are not proteolytically cleaved. Chaperone activity of uncleaved forms is dependent on a non-reducing environment. Post-translationally, polyubiquitinated, leading to proteasomal degradation. Under cellular stress, the intracellular level of cleaved form is reduced due to proteasomal degradation. Extensively glycosylated with sulfated N-linked carbohydrates. About 30% of the protein mass is comprised of complex N-linked carbohydrate. Endoplasmic reticulum (ER) stress induces changes in glycosylation status and increases level of hypoglycosylated forms. Core carbohydrates are essential for chaperone activity. Non-secreted forms are hypoglycosylated or unglycosylated. As to expression, detected in Sertoli cells (at protein level). Detected in cultured Sertoli cells, testis, epididymis, liver and brain.

Its subcellular location is the secreted. It localises to the nucleus. The protein resides in the cytoplasm. The protein localises to the mitochondrion membrane. It is found in the cytosol. Its subcellular location is the microsome. It localises to the endoplasmic reticulum. The protein resides in the mitochondrion. The protein localises to the perinuclear region. It is found in the cytoplasmic vesicle. Its subcellular location is the secretory vesicle. It localises to the chromaffin granule. In terms of biological role, functions as extracellular chaperone that prevents aggregation of non native proteins. Prevents stress-induced aggregation of blood plasma proteins. Inhibits formation of amyloid fibrils by APP, APOC2, B2M, CALCA, CSN3, SNCA and aggregation-prone LYZ variants (in vitro). Does not require ATP. Maintains partially unfolded proteins in a state appropriate for subsequent refolding by other chaperones, such as HSPA8/HSC70. Does not refold proteins by itself. Binding to cell surface receptors triggers internalization of the chaperone-client complex and subsequent lysosomal or proteasomal degradation. When secreted, protects cells against apoptosis and against cytolysis by complement: inhibits assembly of the complement membrane attack complex (MAC) by preventing polymerization of C9 pore component of the MAC complex. Intracellular forms interact with ubiquitin and SCF (SKP1-CUL1-F-box protein) E3 ubiquitin-protein ligase complexes and promote the ubiquitination and subsequent proteasomal degradation of target proteins. Promotes proteasomal degradation of COMMD1 and IKBKB. Modulates NF-kappa-B transcriptional activity. Following stress, promotes apoptosis. Inhibits apoptosis when associated with the mitochondrial membrane by interference with BAX-dependent release of cytochrome c into the cytoplasm. Plays a role in the regulation of cell proliferation. An intracellular form suppresses stress-induced apoptosis by stabilizing mitochondrial membrane integrity through interaction with HSPA5. Secreted form does not affect caspase or BAX-mediated intrinsic apoptosis and TNF-induced NF-kappa-B-activity. Secreted form act as an important modulator during neuronal differentiation through interaction with STMN3. Plays a role in the clearance of immune complexes that arise during cell injury. This is Clusterin from Rattus norvegicus (Rat).